We begin with the raw amino-acid sequence, 258 residues long: 5'-nucleotidase SurE (258 aa).

Residues Asp-16, Asp-17, Ser-47, and Asn-99 each contribute to the a divalent metal cation site.

It belongs to the SurE nucleotidase family. The cofactor is a divalent metal cation.

Its subcellular location is the cytoplasm. It carries out the reaction a ribonucleoside 5'-phosphate + H2O = a ribonucleoside + phosphate. Nucleotidase that shows phosphatase activity on nucleoside 5'-monophosphates. The protein is 5'-nucleotidase SurE of Coxiella burnetii (strain Dugway 5J108-111).